Here is a 748-residue protein sequence, read N- to C-terminus: Semaphorin-3B (748 aa).

Positions 1–25 are cleaved as a signal peptide; the sequence is MGRAEAAAMIPGLALLWVAGLGDTA. Positions 30-512 constitute a Sema domain; that stretch reads RLRLSFQELQ…SRSAVAQIAL (483 aa). N-linked (GlcNAc...) asparagine glycosylation is present at N82. A disulfide bond links C102 and C113. N-linked (GlcNAc...) asparagine glycosylation occurs at N124. 5 disulfides stabilise this stretch: C131/C140, C268/C379, C292/C339, C515/C533, and C643/C709. Residues 561-659 form the Ig-like C2-type domain; the sequence is PSTLCSGDSS…FSQPLRRLVL (99 aa). The segment at 708-748 is disordered; sequence MCRPQPGHHSVAADSRRKGRNRRMHVSELRAERGPRSAAHW. A compositionally biased stretch (basic and acidic residues) spans 732 to 742; it reads HVSELRAERGP.

Belongs to the semaphorin family.

The protein resides in the secreted. Its function is as follows. Inhibits axonal extension by providing local signals to specify territories inaccessible for growing axons. The sequence is that of Semaphorin-3B (Sema3b) from Mus musculus (Mouse).